The chain runs to 462 residues: Histidine--tRNA ligase (462 aa).

Belongs to the class-II aminoacyl-tRNA synthetase family. As to quaternary structure, homodimer.

It localises to the cytoplasm. It carries out the reaction tRNA(His) + L-histidine + ATP = L-histidyl-tRNA(His) + AMP + diphosphate + H(+). This is Histidine--tRNA ligase (hisS) from Nostoc sp. (strain PCC 7120 / SAG 25.82 / UTEX 2576).